A 1405-amino-acid chain; its full sequence is Tonsoku-like protein (1405 aa).

TPR repeat units lie at residues 23–56 (AVSCNQLGDFYNQQGKYTDAVREYVQEAQIYASM), 63–96 (AKAKRMVGEMYTLLCDYDAAKDHINDYLKIAKRL), 163–196 (ARCYLNIGVVKEHMEAFQESIEYIDKAIKISKTH), 203–237 (HLCYISMSLLYICKKNDATAALRFCNMALEVAKRF), 245–278 (CETLITKAEILIKAGDFASAKQILTKAYKKNTPD), 314–347 (KGLYEKLGDGCCHLMNYEKALTYYQKMLENAELN), and 355–388 (VPIYVSLYQTYRDNGQFDKALEYLWKEFELNQDA). An LRR 1 repeat occupies 153-181 (ISKLEQLDMQARCYLNIGVVKEHMEAFQE). One copy of the LRR 2 repeat lies at 439–465 (MVRLRRLMLKHNMQVLVENLEADATAK). The segment at 465–535 (KGIDLDQEES…RGNRTLVIKK (71 aa)) is disordered. Residues 469–483 (LDQEESVGDDEEESD) are compositionally biased toward acidic residues. 3 ANK repeats span residues 538–567 (KGETQLHQACISGNLELVRRLIDQGHTVNV), 571–600 (AGWLPLHEACNHGYREIVELLLDKGAASAI), and 609–638 (DGITPLFDACSNGFLDVAELLLDRGADATV). Disordered regions lie at residues 695-753 (FNAK…KEYR), 806-827 (KRINSGDLSRRTSKENFQDTAL), and 841-880 (TPENEYSQRQKQMRKLTLSRSSSMSSNHSSSATSSRKKHQ). A phosphoserine mark is found at serine 707 and serine 709. A compositionally biased stretch (basic and acidic residues) spans 813–822 (LSRRTSKENF). Residues 841 to 850 (TPENEYSQRQ) are compositionally biased toward polar residues. Residues 859–874 (SRSSSMSSNHSSSATS) show a composition bias toward low complexity. Phosphoserine is present on residues serine 893, serine 895, serine 899, and serine 902. LRR repeat units lie at residues 1085–1108 (QARLTVLDLSCNFIGNEGCQQLAK), 1113–1137 (LLQLKALRLQCNAIGSHGLEALLCG), 1143–1166 (LELLEELNLNQNPLGNASVRILSK), 1186–1211 (LTELQDFDLGFNKLTRFDISFNQLTQ), 1287–1311 (AKQLQMLDISDNSNLSGTTLGYILD), and 1333–1357 (LQKLEQLKQLPRRLELTVDEQVFSM).

The protein belongs to the Tonsoku family.

The protein localises to the nucleus. It is found in the nucleoplasm. The protein resides in the chromosome. Functionally, histone reader involved in homologous recombination-mediated repair of double-strand breaks (DSBs) at stalled or collapsed replication forks. Specifically recognizes and binds histone H3.1. The chain is Tonsoku-like protein from Drosophila melanogaster (Fruit fly).